Reading from the N-terminus, the 316-residue chain is Aprataxin (316 aa).

One can recognise an FHA-like domain in the interval 1–38 (HASARGEGFLLLKADCNKGYVTVKQIGVNPTSVDLVDV). A disordered region spans residues 104 to 142 (KKMEVVDTQSSSADLRPSKSSVSPHEGTTSRKEHLGHWS). Polar residues predominate over residues 110–130 (DTQSSSADLRPSKSSVSPHEG). An HIT domain is found at 142–247 (SQGLKSSMQD…ISQDFDSPAL (106 aa)). Interaction with DNA substrate stretches follow at residues 167 to 171 (DKYPK) and 229 to 230 (SM). Positions 232-236 (QLHLH) match the Histidine triad motif motif. The active-site Tele-AMP-histidine intermediate is the H234. A C2H2-type zinc finger spans residues 291–313 (LRCHLCKQQLSTIPQLKEHLKKH).

Its subcellular location is the nucleus. It is found in the nucleoplasm. It localises to the nucleolus. It catalyses the reaction a 5'-end adenosine-5'-diphospho-5'-2'-deoxyribonucleoside-DNA + H2O = a 5'-end 5'-phospho-2'-deoxyribonucleoside-DNA + AMP + 2 H(+). The enzyme catalyses a 5'-end adenosine-5'-diphospho-5'-ribonucleoside-2'-deoxyribonucleotide-DNA + H2O = a 5'-end 5'-phospho-ribonucleoside-2'-deoxyribonucleotide-DNA + AMP + 2 H(+). It carries out the reaction a 3'-end 2'-deoxyribonucleotide-3'-diphospho-5'-guanosine-DNA + H2O = a 3'-end 2'-deoxyribonucleotide 3'-phosphate-DNA + GMP + 2 H(+). DNA-binding protein involved in single-strand DNA break repair, double-strand DNA break repair and base excision repair. Resolves abortive DNA ligation intermediates formed either at base excision sites, or when DNA ligases attempt to repair non-ligatable breaks induced by reactive oxygen species. Catalyzes the release of adenylate groups covalently linked to 5'-phosphate termini, resulting in the production of 5'-phosphate termini that can be efficiently rejoined. Also able to hydrolyze adenosine 5'-monophosphoramidate (AMP-NH(2)) and diadenosine tetraphosphate (AppppA), but with lower catalytic activity. Likewise, catalyzes the release of 3'-linked guanosine (DNAppG) and inosine (DNAppI) from DNA, but has higher specific activity with 5'-linked adenosine (AppDNA). This Gallus gallus (Chicken) protein is Aprataxin (APTX).